A 411-amino-acid polypeptide reads, in one-letter code: Phosphopentomutase (411 aa).

Asp-14, Asp-306, His-311, Asp-347, His-348, and His-359 together coordinate Mn(2+).

The protein belongs to the phosphopentomutase family. Mn(2+) is required as a cofactor.

It localises to the cytoplasm. It catalyses the reaction 2-deoxy-alpha-D-ribose 1-phosphate = 2-deoxy-D-ribose 5-phosphate. The enzyme catalyses alpha-D-ribose 1-phosphate = D-ribose 5-phosphate. It participates in carbohydrate degradation; 2-deoxy-D-ribose 1-phosphate degradation; D-glyceraldehyde 3-phosphate and acetaldehyde from 2-deoxy-alpha-D-ribose 1-phosphate: step 1/2. In terms of biological role, isomerase that catalyzes the conversion of deoxy-ribose 1-phosphate (dRib-1-P) and ribose 1-phosphate (Rib-1-P) to deoxy-ribose 5-phosphate (dRib-5-P) and ribose 5-phosphate (Rib-5-P), respectively. The protein is Phosphopentomutase of Lactococcus lactis subsp. lactis (strain IL1403) (Streptococcus lactis).